Here is a 151-residue protein sequence, read N- to C-terminus: UPF0756 membrane protein Dred_1676 (151 aa).

A run of 4 helical transmembrane segments spans residues 9-29 (VILL…CASV), 47-67 (THGL…PIAT), 75-95 (LLYN…ILAT), and 111-131 (IIFG…GQPV).

The protein belongs to the UPF0756 family.

The protein localises to the cell membrane. The sequence is that of UPF0756 membrane protein Dred_1676 from Desulforamulus reducens (strain ATCC BAA-1160 / DSM 100696 / MI-1) (Desulfotomaculum reducens).